The sequence spans 1142 residues: Enamelin (1142 aa).

An N-terminal signal peptide occupies residues 1 to 39 (MLVLRCRLGTSFPKLDNLVPKGKMKILLVFLGLLGNSVA). 6 disordered regions span residues 88 to 193 (QYQM…ISNE), 214 to 326 (YYSE…PNIR), 398 to 671 (PANL…QNRW), 874 to 955 (CCAG…LRRN), 1020 to 1048 (VIGTPDEGSNPEGIQSQVQENESERQQQR), and 1062 to 1092 (LAKHHSSTTGTPSSDGRQSPFDGDSITPTEN). Basic residues predominate over residues 103–114 (HPRKSSAPKRHN). 2 N-linked (GlcNAc...) asparagine glycosylation sites follow: asparagine 114 and asparagine 126. Residues 117-128 (DQTQETQKPNQT) show a composition bias toward polar residues. Residues 140–162 (KQPSHNQPQPEEEAQPPQAFPPF) are compositionally biased toward low complexity. Over residues 170 to 186 (QQPPWQIPQRLPPPGYG) the composition is skewed to pro residues. 2 positions are modified to phosphoserine: serine 191 and serine 216. Basic and acidic residues predominate over residues 223 to 234 (DFEKPKEEDPPK). The segment covering 240-285 (TEPTANSTVTETNSTQPNPKGSQGGNDTSPTGNSTPGLNTGNNPPA) has biased composition (polar residues). N-linked (GlcNAc...) asparagine glycosylation is found at asparagine 245, asparagine 252, asparagine 265, and asparagine 296. A compositionally biased stretch (basic and acidic residues) spans 429–442 (RNEKIQNPKEKPLG). Composition is skewed to polar residues over residues 452–470 (KNPTSPWRNSQQYEVNKSN), 507–516 (SDGQTQSQNL), and 531–544 (SETNQSELKHSSYQ). Asparagine 467 is a glycosylation site (N-linked (GlcNAc...) asparagine). N-linked (GlcNAc...) asparagine glycosylation occurs at asparagine 534. The segment covering 556-588 (AKEHFPAGRNTWDHQEISPPFKEDPGRQEEHLP) has biased composition (basic and acidic residues). Residues 652-661 (NEEDPVDPTG) are compositionally biased toward acidic residues. Residues 924–934 (SPTSILPGQRN) are compositionally biased toward polar residues. Asparagine 934 carries N-linked (GlcNAc...) asparagine glycosylation. The span at 935 to 951 (SSEKRESQNPFRDDVST) shows a compositional bias: basic and acidic residues. Asparagine 1040 carries an N-linked (GlcNAc...) asparagine glycan. Positions 1068-1078 (STTGTPSSDGR) are enriched in polar residues.

In terms of processing, phosphorylated by FAM20C in vitro. In terms of tissue distribution, expressed in tooth particularly in odontoblast, ameloblast and cementoblast.

Its subcellular location is the secreted. The protein resides in the extracellular space. It is found in the extracellular matrix. Involved in the mineralization and structural organization of enamel. Involved in the extension of enamel during the secretory stage of dental enamel formation. The sequence is that of Enamelin (ENAM) from Homo sapiens (Human).